The following is a 105-amino-acid chain: Ribonuclease P protein component 4 (105 aa).

Residues cysteine 63, cysteine 66, cysteine 89, and cysteine 92 each contribute to the Zn(2+) site.

The protein belongs to the eukaryotic/archaeal RNase P protein component 4 family. In terms of assembly, consists of a catalytic RNA component and at least 4-5 protein subunits. Zn(2+) is required as a cofactor.

It is found in the cytoplasm. It catalyses the reaction Endonucleolytic cleavage of RNA, removing 5'-extranucleotides from tRNA precursor.. Its function is as follows. Part of ribonuclease P, a protein complex that generates mature tRNA molecules by cleaving their 5'-ends. This chain is Ribonuclease P protein component 4, found in Methanoculleus marisnigri (strain ATCC 35101 / DSM 1498 / JR1).